Reading from the N-terminus, the 89-residue chain is Alpha-latrotoxin associated low molecular weight protein SGV242-280 (89 aa).

The signal sequence occupies residues 1-18 (MSKLHFLILLSVIVSVFC).

The protein belongs to the arthropod CHH/MIH/GIH/VIH hormone family. Expressed by the venom gland.

It is found in the secreted. Functionally, may increase the toxicity of alpha-latrotoxin and/or other venom components. Is non-toxic to mice and to the cockroach Periplaneta americana. This chain is Alpha-latrotoxin associated low molecular weight protein SGV242-280, found in Steatoda grossa (False black widow).